The primary structure comprises 63 residues: Ct-IT2 (63 aa).

Residues 1–63 (KDGYPMDSKG…VWDKATNKCG (63 aa)) enclose the LCN-type CS-alpha/beta domain. 4 disulfide bridges follow: cysteine 11/cysteine 62, cysteine 15/cysteine 36, cysteine 22/cysteine 43, and cysteine 26/cysteine 45. Glycine 63 is modified (glycine amide).

As to expression, expressed by the venom gland.

It localises to the secreted. Its function is as follows. Beta toxins bind voltage-independently at site-4 of sodium channels (Nav) and shift the voltage of activation toward more negative potentials thereby affecting sodium channel activation and promoting spontaneous and repetitive firing. Is highly active on insects, since it provokes paralysis and death when injected into crickets. The protein is Ct-IT2 of Centruroides tecomanus (Scorpion).